The chain runs to 156 residues: SsrA-binding protein (156 aa).

It belongs to the SmpB family.

It is found in the cytoplasm. Required for rescue of stalled ribosomes mediated by trans-translation. Binds to transfer-messenger RNA (tmRNA), required for stable association of tmRNA with ribosomes. tmRNA and SmpB together mimic tRNA shape, replacing the anticodon stem-loop with SmpB. tmRNA is encoded by the ssrA gene; the 2 termini fold to resemble tRNA(Ala) and it encodes a 'tag peptide', a short internal open reading frame. During trans-translation Ala-aminoacylated tmRNA acts like a tRNA, entering the A-site of stalled ribosomes, displacing the stalled mRNA. The ribosome then switches to translate the ORF on the tmRNA; the nascent peptide is terminated with the 'tag peptide' encoded by the tmRNA and targeted for degradation. The ribosome is freed to recommence translation, which seems to be the essential function of trans-translation. This chain is SsrA-binding protein, found in Staphylococcus carnosus (strain TM300).